Reading from the N-terminus, the 237-residue chain is Myelin protein zero-like protein 3 (237 aa).

Positions 1-32 are cleaved as a signal peptide; that stretch reads MQLARGTVGGRGCALFPLLSILVVQGARIVLS. The region spanning 33–149 is the Ig-like V-type domain; sequence LEISADAHVR…NIPLTELTVT (117 aa). At 33-159 the chain is on the extracellular side; it reads LEISADAHVR…ERGFGTMLSS (127 aa). Cys53 and Cys129 form a disulfide bridge. A glycan (N-linked (GlcNAc...) asparagine) is linked at Asn124. The chain crosses the membrane as a helical span at residues 160–180; that stretch reads VALLSILVFVPSAVVVILLLV. The Cytoplasmic portion of the chain corresponds to 181 to 237; it reads RMGRKATGVQKRSRSGYKKSSIEVSDDTDQEDSNDCMTRLCVRCAECLDSDYEEEAY.

The protein belongs to the myelin P0 protein family. In terms of tissue distribution, present in all tissues tested, including the skin. Present in the keratinocytes and sebocytes in the skin (at protein level).

The protein resides in the membrane. In terms of biological role, mediates homophilic cell-cell adhesion. This is Myelin protein zero-like protein 3 (Mpzl3) from Mus musculus (Mouse).